Here is a 451-residue protein sequence, read N- to C-terminus: tRNA-2-methylthio-N(6)-dimethylallyladenosine synthase (451 aa).

An MTTase N-terminal domain is found at 10–128; that stretch reads KKFYTLTFGC…FPQLLEHVMQ (119 aa). [4Fe-4S] cluster contacts are provided by cysteine 19, cysteine 55, cysteine 89, cysteine 165, cysteine 169, and cysteine 172. Residues 151 to 381 enclose the Radical SAM core domain; the sequence is REDSIKAWVV…ISVQQEISEQ (231 aa). The TRAM domain occupies 384-447; sequence KDLENTVQRI…SWNLYGEIFE (64 aa).

The protein belongs to the methylthiotransferase family. MiaB subfamily. In terms of assembly, monomer. [4Fe-4S] cluster is required as a cofactor.

The protein resides in the cytoplasm. It carries out the reaction N(6)-dimethylallyladenosine(37) in tRNA + (sulfur carrier)-SH + AH2 + 2 S-adenosyl-L-methionine = 2-methylsulfanyl-N(6)-dimethylallyladenosine(37) in tRNA + (sulfur carrier)-H + 5'-deoxyadenosine + L-methionine + A + S-adenosyl-L-homocysteine + 2 H(+). Catalyzes the methylthiolation of N6-(dimethylallyl)adenosine (i(6)A), leading to the formation of 2-methylthio-N6-(dimethylallyl)adenosine (ms(2)i(6)A) at position 37 in tRNAs that read codons beginning with uridine. This Natranaerobius thermophilus (strain ATCC BAA-1301 / DSM 18059 / JW/NM-WN-LF) protein is tRNA-2-methylthio-N(6)-dimethylallyladenosine synthase.